The following is a 757-amino-acid chain: Amine oxidase [copper-containing] 2 (757 aa).

Residues 1–4 lie on the Cytoplasmic side of the membrane; the sequence is MNLK. Residues 5–25 form a helical membrane-spanning segment; it reads VLLLLLGLSFLTVFALVYVLL. Residues 26 to 757 are Extracellular-facing; it reads TRQGSFSQSP…NLPSFSYEGL (732 aa). N-linked (GlcNAc...) asparagine glycosylation is found at asparagine 133, asparagine 198, and asparagine 226. Aspartate 381 serves as the catalytic Proton acceptor. An intrachain disulfide couples cysteine 399 to cysteine 425. The Schiff-base intermediate with substrate; via topaquinone role is filled by tyrosine 466. Tyrosine 466 is modified (2',4',5'-topaquinone). Positions 517 and 519 each coordinate Cu(2+). Aspartate 526, leucine 527, aspartate 528, glutamate 569, glutamate 638, phenylalanine 660, and asparagine 662 together coordinate Ca(2+). Asparagine 663 carries an N-linked (GlcNAc...) asparagine glycan. 3 residues coordinate Ca(2+): glutamate 664, aspartate 670, and leucine 671. Histidine 681 is a binding site for Cu(2+). Residues cysteine 731 and cysteine 738 are joined by a disulfide bond.

It belongs to the copper/topaquinone oxidase family. In terms of assembly, homodimer; disulfide-linked. Probably forms heterodimers with AOC3. Cu(2+) is required as a cofactor. It depends on Ca(2+) as a cofactor. Requires L-topaquinone as cofactor. In terms of processing, topaquinone (TPQ) is generated by copper-dependent autoxidation of a specific tyrosyl residue. As to expression, significantly much highly expressed in retina.

Its subcellular location is the cell membrane. The enzyme catalyses 2-phenylethylamine + O2 + H2O = 2-phenylacetaldehyde + H2O2 + NH4(+). It catalyses the reaction tryptamine + O2 + H2O = indole-3-acetaldehyde + H2O2 + NH4(+). The catalysed reaction is tyramine + O2 + H2O = (4-hydroxyphenyl)acetaldehyde + H2O2 + NH4(+). Its function is as follows. Catalyzes the oxidative deamination of primary amines to the corresponding aldehydes with the concomitant production of hydrogen peroxide and ammonia. Has a preference for 2-phenylethylamine, tryptamine and tyramine. Could also act on methylamine and benzylamine but much less efficiently. The sequence is that of Amine oxidase [copper-containing] 2 from Mus musculus (Mouse).